Consider the following 148-residue polypeptide: UPF0756 membrane protein NMCC_1816 (148 aa).

A run of 4 helical transmembrane segments spans residues 13–35, 50–70, 80–100, and 121–141; these read LILL…LLLM, HGLN…LVSG, FLNF…WLAG, and VIGV…AGIL.

Belongs to the UPF0756 family.

It localises to the cell membrane. The protein is UPF0756 membrane protein NMCC_1816 of Neisseria meningitidis serogroup C (strain 053442).